Consider the following 858-residue polypeptide: Taste receptor type 1 member 3 (858 aa).

Residues 1 to 20 (MPALAIMGLSLAAFLELGMG) form the signal peptide. The Extracellular segment spans residues 21–572 (ASLCLSQQFK…RPKFLAWGEP (552 aa)). N-linked (GlcNAc...) asparagine; when associated with variant T-60 glycosylation occurs at Asn-58. Residues Asn-85, Asn-130, Asn-203, Asn-264, Asn-379, Asn-387, Asn-418, Asn-439, and Asn-482 are each glycosylated (N-linked (GlcNAc...) asparagine). A helical membrane pass occupies residues 573-593 (VVLSLLLLLCLVLGLALAALG). Topologically, residues 594–610 (LSVHHWDSPLVQASGGS) are cytoplasmic. The chain crosses the membrane as a helical span at residues 611–631 (QFCFGLICLGLFCLSVLLFPG). The Extracellular portion of the chain corresponds to 632-644 (RPSSASCLAQQPM). Residues 645 to 665 (AHLPLTGCLSTLFLQAAETFV) form a helical membrane-spanning segment. Residues 666–687 (ESELPLSWANWLCSYLRGLWAW) are Cytoplasmic-facing. The helical transmembrane segment at 688–708 (LVVLLATFVEAALCAWYLIAF) threads the bilayer. Residues 709 to 735 (PPEVVTDWSVLPTEVLEHCHVRSWVSL) lie on the Extracellular side of the membrane. A helical transmembrane segment spans residues 736–756 (GLVHITNAMLAFLCFLGTFLV). The Cytoplasmic segment spans residues 757-767 (QSQPGRYNRAR). A helical transmembrane segment spans residues 768–788 (GLTFAMLAYFITWVSFVPLLA). Residues 789–796 (NVQVAYQP) lie on the Extracellular side of the membrane. The chain crosses the membrane as a helical span at residues 797–817 (AVQMGAILVCALGILVTFHLP). The Cytoplasmic segment spans residues 818–858 (KCYVLLWLPKLNTQEFFLGRNAKKAADENSGGGEAAQGHNE).

Belongs to the G-protein coupled receptor 3 family. TAS1R subfamily. In terms of assembly, forms homodimers or heterodimers with TAS1R1 and TAS1R2. Post-translationally, the Thr-60 variant is predicted to introduce a novel N-linked glycosylation site at Asn-58. The addition of even a short carbohydrate group at Asn-58 is predicted to disrupt one of the contact surfaces required for stability of a dimer. Therefore a Thr-60 variant N-glycosylated at Asn-58 is predicted to be precluded from forming homodimers or heterodimers. Expressed in circumvallate, foliate and fungiform taste papillae as well as in taste buds on the palate. Also expressed in testis. Not expressed in brain, heart, kidney, liver or spleen. The topographic distribution in various taste papillae is different from those of other T1R members.

The protein localises to the cell membrane. In terms of biological role, putative taste receptor. TAS1R1/TAS1R3 responds to the umami taste stimulus (the taste of monosodium glutamate) and also to most of the 20 standard L-amino acids, but not to their D-enantiomers or other compounds. TAS1R2/TAS1R3 recognizes diverse natural and synthetic sweeteners. TAS1R3 is essential for the recognition and response to the disaccharide trehalose. Sequence differences within and between species can significantly influence the selectivity and specificity of taste responses. The polypeptide is Taste receptor type 1 member 3 (Tas1r3) (Mus musculus (Mouse)).